Reading from the N-terminus, the 253-residue chain is 5'/3'-nucleotidase SurE (253 aa).

A divalent metal cation contacts are provided by Asp8, Asp9, Ser39, and Asn92.

Belongs to the SurE nucleotidase family. A divalent metal cation is required as a cofactor.

The protein resides in the cytoplasm. The catalysed reaction is a ribonucleoside 5'-phosphate + H2O = a ribonucleoside + phosphate. The enzyme catalyses a ribonucleoside 3'-phosphate + H2O = a ribonucleoside + phosphate. It carries out the reaction [phosphate](n) + H2O = [phosphate](n-1) + phosphate + H(+). Nucleotidase with a broad substrate specificity as it can dephosphorylate various ribo- and deoxyribonucleoside 5'-monophosphates and ribonucleoside 3'-monophosphates with highest affinity to 3'-AMP. Also hydrolyzes polyphosphate (exopolyphosphatase activity) with the preference for short-chain-length substrates (P20-25). Might be involved in the regulation of dNTP and NTP pools, and in the turnover of 3'-mononucleotides produced by numerous intracellular RNases (T1, T2, and F) during the degradation of various RNAs. The sequence is that of 5'/3'-nucleotidase SurE from Shigella boydii serotype 18 (strain CDC 3083-94 / BS512).